Consider the following 525-residue polypeptide: Acetyl-CoA hydrolase (525 aa).

Residue 280-284 (GIGNI) participates in CoA binding. The 5-glutamyl coenzyme A thioester intermediate role is filled by glutamate 305. CoA-binding residues include asparagine 395 and glycine 399.

The protein belongs to the acetyl-CoA hydrolase/transferase family.

The protein resides in the cytoplasm. It carries out the reaction acetyl-CoA + H2O = acetate + CoA + H(+). In terms of biological role, required for utilization of acetate. This chain is Acetyl-CoA hydrolase (acu-8), found in Neurospora crassa (strain ATCC 24698 / 74-OR23-1A / CBS 708.71 / DSM 1257 / FGSC 987).